Reading from the N-terminus, the 278-residue chain is Urease accessory protein UreD 3 (278 aa).

It belongs to the UreD family. As to quaternary structure, ureD, UreF and UreG form a complex that acts as a GTP-hydrolysis-dependent molecular chaperone, activating the urease apoprotein by helping to assemble the nickel containing metallocenter of UreC. The UreE protein probably delivers the nickel.

The protein resides in the cytoplasm. In terms of biological role, required for maturation of urease via the functional incorporation of the urease nickel metallocenter. The protein is Urease accessory protein UreD 3 of Bradyrhizobium sp. (strain BTAi1 / ATCC BAA-1182).